Reading from the N-terminus, the 300-residue chain is Ribonuclease HIII (300 aa).

One can recognise an RNase H type-2 domain in the interval 83 to 300; it reads IPIIGSDEVG…THKAQALLTK (218 aa). The a divalent metal cation site is built by aspartate 89, glutamate 90, and aspartate 194.

The protein belongs to the RNase HII family. RnhC subfamily. Mn(2+) serves as cofactor. The cofactor is Mg(2+).

It localises to the cytoplasm. It carries out the reaction Endonucleolytic cleavage to 5'-phosphomonoester.. Endonuclease that specifically degrades the RNA of RNA-DNA hybrids. In Streptococcus pyogenes serotype M5 (strain Manfredo), this protein is Ribonuclease HIII.